Here is a 560-residue protein sequence, read N- to C-terminus: MNIDVVLLLQQNPILLIFVVLAIGLAFGKVRIANMQLGNSIGVLITSLIMGHLGFSFNAEALTIGFMLFIYCVGIEAGPNFFGIFFRDGKHYFTLSMVVLVTAVSISYFASHYMGLDFGLSAGMMAGALTATPVLVGAQDALNSGLATIPRNMEFSLVLENLSVGYAMAYLVGLISMIMFAKLLPRLQKQNLSDSAQQIAQERGLGGSGQRKVYLPIIRAYRVGPELINWTDGKNLRELGIYRQTGCYIERIRRHGILAHPDGDAILQEGDEIALVGFPDSHARLDPSFRNGKEVFDRNLLDLRIVEEEIVVKSDAIAGKRLSDLNLSEYGCFLNRVIRAQIEMPMDLDIVLAKGDILQVSGEKSRVHGLAERIGFISIHSQIADLLAFCSFFILGIMFGLVTMTFGQVSFSLGNAVGLLLSGITLGFLRANHPTFGYVPQGALNMVKDLGLMIFMVGIGLSAGGKMFEHLTQVGPQIIGIAFLVSVVPVFFAYLVGAYVLKMNRALLFGAIIGARTCAPAMDIVNEYAKSTIPALGYAGTYAIANILMTLAGTILIILS.

5 helical membrane-spanning segments follow: residues 5 to 25 (VVLL…AIGL), 37 to 57 (LGNS…GFSF), 66 to 86 (FMLF…GIFF), 91 to 111 (HYFT…YFAS), and 164 to 184 (VGYA…AKLL). RCK C-terminal domains lie at 203 to 292 (RGLG…FRNG) and 293 to 376 (KEVF…RIGF). 6 helical membrane passes run 386–406 (LLAF…TMTF), 409–429 (VSFS…LGFL), 443–463 (ALNM…GLSA), 478–498 (IIGI…LVGA), 506–526 (ALLF…DIVN), and 539–559 (AGTY…LIIL).

It belongs to the AAE transporter (TC 2.A.81) family. YbjL subfamily.

Its subcellular location is the cell membrane. This is Putative transport protein VV1438 from Vibrio vulnificus (strain YJ016).